Here is a 142-residue protein sequence, read N- to C-terminus: Large ribosomal subunit protein uL11 (142 aa).

The protein belongs to the universal ribosomal protein uL11 family. In terms of assembly, part of the ribosomal stalk of the 50S ribosomal subunit. Interacts with L10 and the large rRNA to form the base of the stalk. L10 forms an elongated spine to which L12 dimers bind in a sequential fashion forming a multimeric L10(L12)X complex. One or more lysine residues are methylated.

Functionally, forms part of the ribosomal stalk which helps the ribosome interact with GTP-bound translation factors. This chain is Large ribosomal subunit protein uL11, found in Vesicomyosocius okutanii subsp. Calyptogena okutanii (strain HA).